Consider the following 455-residue polypeptide: Phosphomethylpyrimidine synthase (455 aa).

Substrate is bound by residues asparagine 80, methionine 109, tyrosine 139, histidine 175, 195 to 197 (SRG), 236 to 239 (DALR), and glutamate 275. Zn(2+) is bound at residue histidine 279. Position 302 (tyrosine 302) interacts with substrate. Zn(2+) is bound at residue histidine 343. Residues cysteine 423, cysteine 426, and cysteine 431 each coordinate [4Fe-4S] cluster.

It belongs to the ThiC family. Requires [4Fe-4S] cluster as cofactor.

The enzyme catalyses 5-amino-1-(5-phospho-beta-D-ribosyl)imidazole + S-adenosyl-L-methionine = 4-amino-2-methyl-5-(phosphooxymethyl)pyrimidine + CO + 5'-deoxyadenosine + formate + L-methionine + 3 H(+). The protein operates within cofactor biosynthesis; thiamine diphosphate biosynthesis. Its function is as follows. Catalyzes the synthesis of the hydroxymethylpyrimidine phosphate (HMP-P) moiety of thiamine from aminoimidazole ribotide (AIR) in a radical S-adenosyl-L-methionine (SAM)-dependent reaction. The polypeptide is Phosphomethylpyrimidine synthase (Synechococcus sp. (strain JA-3-3Ab) (Cyanobacteria bacterium Yellowstone A-Prime)).